Reading from the N-terminus, the 461-residue chain is BSD domain-containing protein 1 (461 aa).

A phosphoserine mark is found at S123 and S197. In terms of domain architecture, BSD spans 177–229 (WLSQFCLEEKKGEISELLVGSPSIRALYTKMVPAAVSHSEFWHRYFYKVHQLE). Positions 239–384 (KQRAEQSISE…SGPEPRPPAR (146 aa)) are disordered. A compositionally biased stretch (acidic residues) spans 250-259 (PGWEEEEEEL). A compositionally biased stretch (low complexity) spans 295-318 (LVTPVEPPTEVTPSESSESVSLVT). A Phosphothreonine modification is found at T387. The interval 398-430 (VFELNSDSGKSTPSNNGKKGSSTDISEDWEKDF) is disordered. Residues 402-421 (NSDSGKSTPSNNGKKGSSTD) show a composition bias toward polar residues. Phosphoserine is present on residues S418, S419, and S449.

The sequence is that of BSD domain-containing protein 1 (BSDC1) from Bos taurus (Bovine).